A 164-amino-acid chain; its full sequence is Siroheme decarboxylase alpha subunit (164 aa).

It belongs to the Ahb/Nir family. In terms of assembly, forms a heterodimer composed of AhbA and AhbB.

The catalysed reaction is siroheme + 2 H(+) = 12,18-didecarboxysiroheme + 2 CO2. It participates in porphyrin-containing compound metabolism; protoheme biosynthesis. Its function is as follows. Involved in siroheme-dependent heme b biosynthesis. Catalyzes the decarboxylation of siroheme into didecarboxysiroheme. The protein is Siroheme decarboxylase alpha subunit of Oleidesulfovibrio alaskensis (strain ATCC BAA-1058 / DSM 17464 / G20) (Desulfovibrio alaskensis).